The chain runs to 477 residues: Serine/threonine-protein kinase prp4 (477 aa).

The segment at 25 to 123 (KYQQTGNGHS…SPSVKRQNTG (99 aa)) is disordered. Residues 38–47 (IPEKKLKEDV) show a composition bias toward basic and acidic residues. Positions 74 to 86 (EGSNSNTKLDVTN) are enriched in polar residues. The span at 87 to 98 (STTSDSPSIKSS) shows a compositional bias: low complexity. Position 92 is a phosphoserine (Ser92). The segment covering 113–123 (PSPSVKRQNTG) has biased composition (polar residues). The Protein kinase domain occupies 159–477 (YIVQSNLGKG…ALKHPFFIKK (319 aa)). ATP is bound by residues 165–173 (LGKGMFSTV) and Lys188. The active-site Proton acceptor is Asp286. Tyr320 carries the phosphotyrosine modification.

This sequence belongs to the protein kinase superfamily. CMGC Ser/Thr protein kinase family.

It carries out the reaction L-seryl-[protein] + ATP = O-phospho-L-seryl-[protein] + ADP + H(+). The enzyme catalyses L-threonyl-[protein] + ATP = O-phospho-L-threonyl-[protein] + ADP + H(+). Functionally, has a role in pre-mRNA splicing and is essential for growth. Phosphorylates srp1. In Schizosaccharomyces pombe (strain 972 / ATCC 24843) (Fission yeast), this protein is Serine/threonine-protein kinase prp4 (prp4).